We begin with the raw amino-acid sequence, 347 residues long: GMP reductase (347 aa).

An NADP(+)-binding site is contributed by 108-131; that stretch reads ADFEKTQQILSQNPQLNFVCIDVA. Residues Gly181 and Gly183 each contribute to the K(+) site. Cys186 (thioimidate intermediate) is an active-site residue. 216-239 is an NADP(+) binding site; the sequence is IISDGGCTMPGDVAKAFGGGADFV.

The protein belongs to the IMPDH/GMPR family. GuaC type 1 subfamily. In terms of assembly, homotetramer.

It catalyses the reaction IMP + NH4(+) + NADP(+) = GMP + NADPH + 2 H(+). Catalyzes the irreversible NADPH-dependent deamination of GMP to IMP. It functions in the conversion of nucleobase, nucleoside and nucleotide derivatives of G to A nucleotides, and in maintaining the intracellular balance of A and G nucleotides. The protein is GMP reductase of Klebsiella pneumoniae subsp. pneumoniae (strain ATCC 700721 / MGH 78578).